The primary structure comprises 278 residues: Large ribosomal subunit protein uL2 (278 aa).

The span at 210 to 219 (RKRWLGKRPQ) shows a compositional bias: basic residues. Positions 210–278 (RKRWLGKRPQ…LIIRHRKGSK (69 aa)) are disordered. A compositionally biased stretch (basic and acidic residues) spans 258–270 (KTRDVKKASEKLI).

It belongs to the universal ribosomal protein uL2 family. Part of the 50S ribosomal subunit. Forms a bridge to the 30S subunit in the 70S ribosome.

In terms of biological role, one of the primary rRNA binding proteins. Required for association of the 30S and 50S subunits to form the 70S ribosome, for tRNA binding and peptide bond formation. It has been suggested to have peptidyltransferase activity; this is somewhat controversial. Makes several contacts with the 16S rRNA in the 70S ribosome. The sequence is that of Large ribosomal subunit protein uL2 from Lactobacillus acidophilus (strain ATCC 700396 / NCK56 / N2 / NCFM).